The chain runs to 161 residues: Large ribosomal subunit protein uL10 (161 aa).

The protein belongs to the universal ribosomal protein uL10 family. In terms of assembly, part of the ribosomal stalk of the 50S ribosomal subunit. The N-terminus interacts with L11 and the large rRNA to form the base of the stalk. The C-terminus forms an elongated spine to which L12 dimers bind in a sequential fashion forming a multimeric L10(L12)X complex.

Functionally, forms part of the ribosomal stalk, playing a central role in the interaction of the ribosome with GTP-bound translation factors. This is Large ribosomal subunit protein uL10 (rplJ) from Wigglesworthia glossinidia brevipalpis.